The chain runs to 1107 residues: Membrane-associated guanylate kinase, WW and PDZ domain-containing protein 3 (1107 aa).

Positions 17–102 (ECGLSGVGGD…PIRLKTVKPG (86 aa)) constitute a PDZ 1 domain. A Guanylate kinase-like domain is found at 110-284 (RHYLSLQFQK…SMDFRNYLTR (175 aa)). 117-124 (FQKGSIDH) contacts ATP. The segment at 210-277 (FDTETQRKRT…SYNQTNSSMD (68 aa)) is disordered. A compositionally biased stretch (polar residues) spans 220–231 (TSVSKMQRTDSS). The segment covering 232 to 241 (LPEEEDEEER) has biased composition (acidic residues). Basic and acidic residues predominate over residues 251–261 (TDHRDRQEPSE). Residues 267–277 (PSYNQTNSSMD) are compositionally biased toward polar residues. 2 WW domains span residues 289–322 (EPLP…DPRL) and 335–368 (GELP…NPVL). The interval 374-398 (KQLNPAPSEGTVHQEPENSQFTRDP) is disordered. 4 consecutive PDZ domains span residues 407–489 (HTSL…TLCR), 577–653 (TIPL…LILR), 727–809 (DVFL…TVRR), and 853–940 (DVIL…IAEE). The segment at 941–975 (EHRGPPSGSNSARQSPAPQHRPMGQTQPTYGTLDR) is disordered. Positions 947–957 (SGSNSARQSPA) are enriched in polar residues. The PDZ 6 domain occupies 1003–1085 (PVELERGPRG…KVLLLLRPGT (83 aa)).

It belongs to the MAGUK family.

Its subcellular location is the cell membrane. The protein localises to the cell junction. The protein resides in the tight junction. In terms of biological role, acts as a scaffolding protein at cell-cell junctions, thereby regulating various cellular and signaling processes. The polypeptide is Membrane-associated guanylate kinase, WW and PDZ domain-containing protein 3 (magi3) (Xenopus tropicalis (Western clawed frog)).